Reading from the N-terminus, the 791-residue chain is Putative inactive tyrosine-protein kinase Wsck (791 aa).

The first 26 residues, M1–G26, serve as a signal peptide directing secretion. Topologically, residues L27 to S401 are extracellular. In terms of domain architecture, WSC spans A39–I125. Residues G131–G246 enclose the Fibronectin type-III domain. Residues N139, N217, and N329 are each glycosylated (N-linked (GlcNAc...) asparagine). Residues V402–A422 form a helical membrane-spanning segment. Topologically, residues Y423 to G791 are cytoplasmic. The Protein kinase domain occupies L493–M758. Residue I499–I507 coordinates ATP.

This sequence belongs to the protein kinase superfamily. Tyr protein kinase family.

The protein resides in the membrane. In terms of biological role, probably lacks tyrosine-protein kinase activity. The polypeptide is Putative inactive tyrosine-protein kinase Wsck (Drosophila melanogaster (Fruit fly)).